The sequence spans 347 residues: GMP reductase (347 aa).

108–131 contacts NADP(+); the sequence is ADFEKTKQILAQSPALNFVCIDVA. Positions 181 and 183 each coordinate K(+). Cysteine 186 acts as the Thioimidate intermediate in catalysis. 216-239 is an NADP(+) binding site; it reads IVSDGGCTMPGDVAKAFGGGADFV.

The protein belongs to the IMPDH/GMPR family. GuaC type 1 subfamily. In terms of assembly, homotetramer.

It carries out the reaction IMP + NH4(+) + NADP(+) = GMP + NADPH + 2 H(+). Functionally, catalyzes the irreversible NADPH-dependent deamination of GMP to IMP. It functions in the conversion of nucleobase, nucleoside and nucleotide derivatives of G to A nucleotides, and in maintaining the intracellular balance of A and G nucleotides. This chain is GMP reductase, found in Citrobacter koseri (strain ATCC BAA-895 / CDC 4225-83 / SGSC4696).